Here is a 154-residue protein sequence, read N- to C-terminus: 6,7-dimethyl-8-ribityllumazine synthase (154 aa).

5-amino-6-(D-ribitylamino)uracil contacts are provided by residues 22-23 (FN), 56-58 (SWE), and 80-82 (VLI). Position 85–86 (85–86 (AT)) interacts with (2S)-2-hydroxy-3-oxobutyl phosphate. His88 (proton donor) is an active-site residue. Phe113 is a binding site for 5-amino-6-(D-ribitylamino)uracil. Residue Arg127 participates in (2S)-2-hydroxy-3-oxobutyl phosphate binding. A 5-amino-6-(D-ribitylamino)uracil-binding site is contributed by Lys135.

This sequence belongs to the DMRL synthase family. As to quaternary structure, forms an icosahedral capsid composed of 60 subunits, arranged as a dodecamer of pentamers.

It catalyses the reaction (2S)-2-hydroxy-3-oxobutyl phosphate + 5-amino-6-(D-ribitylamino)uracil = 6,7-dimethyl-8-(1-D-ribityl)lumazine + phosphate + 2 H2O + H(+). It participates in cofactor biosynthesis; riboflavin biosynthesis; riboflavin from 2-hydroxy-3-oxobutyl phosphate and 5-amino-6-(D-ribitylamino)uracil: step 1/2. Functionally, catalyzes the formation of 6,7-dimethyl-8-ribityllumazine by condensation of 5-amino-6-(D-ribitylamino)uracil with 3,4-dihydroxy-2-butanone 4-phosphate. This is the penultimate step in the biosynthesis of riboflavin. The sequence is that of 6,7-dimethyl-8-ribityllumazine synthase (ribH) from Aquifex aeolicus (strain VF5).